Reading from the N-terminus, the 429-residue chain is Adenylosuccinate synthetase (429 aa).

Residues 13–19 and 41–43 contribute to the GTP site; these read GDEGKGK and GHT. Catalysis depends on Asp14, which acts as the Proton acceptor. Residues Asp14 and Gly41 each contribute to the Mg(2+) site. Residues 14–17, 39–42, Thr130, Arg144, Gln225, Thr240, and Arg304 each bind IMP; these read DEGK and NAGH. Residue His42 is the Proton donor of the active site. Substrate is bound at residue 300–306; that stretch reads ATTGRAR. Residues Arg306, 332-334, and 413-415 contribute to the GTP site; these read KLD and STG.

Belongs to the adenylosuccinate synthetase family. As to quaternary structure, homodimer. Mg(2+) serves as cofactor.

The protein localises to the cytoplasm. The enzyme catalyses IMP + L-aspartate + GTP = N(6)-(1,2-dicarboxyethyl)-AMP + GDP + phosphate + 2 H(+). Its pathway is purine metabolism; AMP biosynthesis via de novo pathway; AMP from IMP: step 1/2. In terms of biological role, plays an important role in the de novo pathway of purine nucleotide biosynthesis. Catalyzes the first committed step in the biosynthesis of AMP from IMP. This is Adenylosuccinate synthetase from Pseudomonas fluorescens (strain SBW25).